The sequence spans 247 residues: Pulmonary surfactant-associated protein A (247 aa).

A signal peptide spans 1 to 15; it reads MLLLSLALTLISAPA. One can recognise a Collagen-like domain in the interval 27-99; that stretch reads GSPGIPGTPG…PGERGPPGLP (73 aa). 4-hydroxyproline occurs at positions 29, 32, 35, 41, 53, 56, 62, 66, and 69. A disordered region spans residues 30–100; the sequence is GIPGTPGSHG…GERGPPGLPA (71 aa). The segment covering 41 to 50 has biased composition (basic and acidic residues); that stretch reads PGRDGRDGVK. The segment covering 53–64 has biased composition (pro residues); the sequence is PGPPGPMGPPGG. The segment covering 83–92 has biased composition (basic and acidic residues); that stretch reads ERGDKGEPGE. A C-type lectin domain is found at 132–247; it reads AVGEKIFSTN…LQYRLVICEF (116 aa). Disulfide bonds link Cys154/Cys245 and Cys223/Cys237. Asn206 carries an N-linked (GlcNAc...) asparagine glycan. Ca(2+)-binding residues include Glu214, Arg216, Asn233, and Asp234.

Belongs to the SFTPA family. As to quaternary structure, oligomeric complex of 6 set of homotrimers.

It localises to the secreted. It is found in the extracellular space. The protein resides in the extracellular matrix. Its subcellular location is the surface film. In terms of biological role, in presence of calcium ions, it binds to surfactant phospholipids and contributes to lower the surface tension at the air-liquid interface in the alveoli of the mammalian lung and is essential for normal respiration. Enhances the expression of MYO18A/SP-R210 on alveolar macrophages. The chain is Pulmonary surfactant-associated protein A (SFTPA1) from Oryctolagus cuniculus (Rabbit).